Consider the following 233-residue polypeptide: 7-cyano-7-deazaguanine synthase 2 (233 aa).

ATP is bound at residue 8–18 (LSGGLDSTTCM). Zn(2+) is bound by residues cysteine 186, cysteine 194, cysteine 197, and cysteine 200.

The protein belongs to the QueC family. Homodimer. The cofactor is Zn(2+).

The enzyme catalyses 7-carboxy-7-deazaguanine + NH4(+) + ATP = 7-cyano-7-deazaguanine + ADP + phosphate + H2O + H(+). Its pathway is purine metabolism; 7-cyano-7-deazaguanine biosynthesis. Catalyzes the ATP-dependent conversion of 7-carboxy-7-deazaguanine (CDG) to 7-cyano-7-deazaguanine (preQ(0)). The protein is 7-cyano-7-deazaguanine synthase 2 of Desulfitobacterium hafniense (strain Y51).